The following is a 595-amino-acid chain: Protein alan shepard (595 aa).

Residues 1-12 (MHPRYSPAPPPH) show a composition bias toward pro residues. The segment at 1–82 (MHPRYSPAPP…ASVAAAPPTP (82 aa)) is disordered. Residue Tyr-5 is modified to Phosphotyrosine. Residues 13–31 (QQQQQQQQQPMGGPHQQQS) show a composition bias toward low complexity. Positions 32-43 (AGGGPGHGGGAS) are enriched in gly residues. Over residues 50–68 (PNSQQLPPQMPRSQNYANG) the composition is skewed to polar residues. The segment covering 69–78 (SSSAASVAAA) has biased composition (low complexity). 2 positions are modified to phosphotyrosine: Tyr-138 and Tyr-154. Residues 184 to 238 (RVPTAASPSNTNSSSSSNTGSQSGTLSTSLSNTTNTNTTMGPNGTAQNQNQQGGE) form a disordered region. Positions 190–238 (SPSNTNSSSSSNTGSQSGTLSTSLSNTTNTNTTMGPNGTAQNQNQQGGE) are enriched in low complexity. 2 consecutive RRM domains span residues 243–316 (TNLY…MAKQ) and 322–401 (TNLY…FADG). The tract at residues 569-595 (MTDSEQASTAASPDEAYTQYPHQAAPK) is disordered.

Its function is as follows. Has a role in the perception of gravity. In Drosophila virilis (Fruit fly), this protein is Protein alan shepard.